Reading from the N-terminus, the 858-residue chain is MAELSEEALLSVLPTIRVPKAGDRVHKDECAFSFDTPESEGGLYICMNTFLGFGKQYVERHFNKTGQRVYLHLRRTRRPKEEDPATGTGDPPRKKPTRLAIGVEGGFDLSEEKFELDEDVKIVILPDYLEIARDGLGGLPDIVRDRVTSAVEALLSADSASRKQEVQAWDGEVRQVSKHAFSLKQLDNPARIPPCGWKCSKCDMRENLWLNLTDGSILCGRRYFDGSGGNNHAVEHYRETGYPLAVKLGTITPDGADVYSYDEDDMVLDPSLAEHLSHFGIDMLKMQKTDKTMTELEIDMNQRIGEWELIQESGVPLKPLFGPGYTGIRNLGNSCYLNSVVQVLFSIPDFQRKYVDKLEKIFQNAPTDPTQDFSTQVAKLGHGLLSGEYSKPVPESGDGERVPEQKEVQDGIAPRMFKALIGKGHPEFSTNRQQDAQEFFLHLINMVERNCRSSENPNEVFRFLVEEKIKCLATEKVKYTQRVDYIMQLPVPMDAALNKEELLEYEEKKRQAEEEKMALPELVRAQVPFSSCLEAYGAPEQVDDFWSTALQAKSVAVKTTRFASFPDYLVIQIKKFTFGLDWVPKKLDVSIEMPEELDISQLRGTGLQPGEEELPDIAPPLVTPDEPKGSLGFYGNEDEDSFCSPHFSSPTSPMLDESVIIQLVEMGFPMDACRKAVYYTGNSGAEAAMNWVMSHMDDPDFANPLILPGSSGPGSTSAAADPPPEDCVTTIVSMGFSRDQALKALRATNNSLERAVDWIFSHIDDLDAEAAMDISEGRSAADSISESVPVGPKVRDGPGKYQLFAFISHMGTSTMCGHYVCHIKKEGRWVIYNDQKVCASEKPPKDLGYIYFYQRVAS.

N-acetylalanine is present on Ala-2. The interval 74 to 96 (RRTRRPKEEDPATGTGDPPRKKP) is disordered. Lys-113 is covalently cross-linked (Glycyl lysine isopeptide (Lys-Gly) (interchain with G-Cter in SUMO)). Ser-149 and Ser-156 each carry phosphoserine. The UBP-type; degenerate zinc finger occupies 175–283 (QVSKHAFSLK…EHLSHFGIDM (109 aa)). A disulfide bridge links Cys-195 with Cys-816. Residues Cys-199 and Cys-202 each coordinate Zn(2+). Residue Trp-209 participates in substrate binding. Cys-219 contributes to the Zn(2+) binding site. 221–224 (RRYF) lines the substrate pocket. His-232 provides a ligand contact to Zn(2+). Positions 259, 261, and 264 each coordinate substrate. Thr-292 carries the phosphothreonine modification. One can recognise a USP domain in the interval 326–856 (TGIRNLGNSC…LGYIYFYQRV (531 aa)). Residue Cys-335 is the Nucleophile of the active site. Residue Thr-623 is modified to Phosphothreonine. 2 UBA domains span residues 654–695 (MLDE…VMSH) and 722–762 (PPPE…IFSH). Phosphoserine is present on residues Ser-779, Ser-783, and Ser-785. His-818 acts as the Proton acceptor in catalysis.

This sequence belongs to the peptidase C19 family. In terms of assembly, homodimer. Interacts with TRIML1. Ubiquitinated by SMURF1; leading to proteasomal degradation. Post-translationally, SUMOylated at Lys-113; SUMOylation affects the interaction with Cav3.2 channels.

It is found in the cytoplasm. The protein resides in the stress granule. The protein localises to the nucleus. It catalyses the reaction Thiol-dependent hydrolysis of ester, thioester, amide, peptide and isopeptide bonds formed by the C-terminal Gly of ubiquitin (a 76-residue protein attached to proteins as an intracellular targeting signal).. Deubiquitinating enzyme that participates in a wide range of cellular processes by specifically cleaving isopeptide bonds between ubiquitin and substrate proteins or ubiquitin itself. Affects thereby important cellular signaling pathways such as NF-kappa-B, Wnt/beta-catenin, and cytokine production by regulating ubiquitin-dependent protein degradation. Participates in the activation of the Wnt signaling pathway by promoting FOXM1 deubiquitination and stabilization that induces the recruitment of beta-catenin to Wnt target gene promoter. Regulates the assembly and disassembly of heat-induced stress granules by mediating the hydrolysis of unanchored ubiquitin chains. Promotes lipopolysaccharide-induced apoptosis and inflammatory response by stabilizing the TXNIP protein. Affects T-cell biology by stabilizing the inhibitory receptor on T-cells PDC1. Acts as a negative regulator of autophagy by regulating ULK1 at both protein and mRNA levels. Acts also as a negative regulator of type I interferon production by simultaneously removing both 'Lys-48'-linked unanchored and 'Lys-63'-linked anchored polyubiquitin chains on the transcription factor IRF3. Modulates the stability of DNA mismatch repair protein MLH1 and counteracts the effect of the ubiquitin ligase UBR4. Upon activation by insulin, it gets phosphorylated through mTORC1-mediated phosphorylation to enhance YTHDF1 stability by removing 'Lys-11'-linked polyubiquitination. May also deubiquitinate other substrates such as the calcium channel CACNA1H. In Homo sapiens (Human), this protein is Ubiquitin carboxyl-terminal hydrolase 5 (USP5).